A 98-amino-acid chain; its full sequence is Transcription elongation factor A protein-like 7 (98 aa).

Basic and acidic residues predominate over residues 1-24; sequence MQRSCNEKEGKPKCSEPKREEEHP. The tract at residues 1–31 is disordered; that stretch reads MQRSCNEKEGKPKCSEPKREEEHPYGAFEGQ. Positions 59–89 form a coiled coil; it reads GEEMTGEEEEMERCLEEIRSLRKKFRALHSN.

Belongs to the TFS-II family. TFA subfamily.

The protein resides in the nucleus. Functionally, plays a role in the negative regulation of NF-kappa-B signaling at the basal level by modulating transcriptional activity of NF-kappa-B on its target gene promoters. Associates with cyclin D1 promoter containing Myc E-box sequence and transcriptionally represses cyclin D1 expression. Regulates telomerase reverse transcriptase expression and telomerase activity in both ALT (alternative lengthening of telomeres)and telomerase-positive cell lines. The polypeptide is Transcription elongation factor A protein-like 7 (Tceal7) (Rattus norvegicus (Rat)).